We begin with the raw amino-acid sequence, 374 residues long: 4-hydroxy-3-methylbut-2-en-1-yl diphosphate synthase (flavodoxin) (374 aa).

[4Fe-4S] cluster contacts are provided by C270, C273, C305, and E312.

It belongs to the IspG family. [4Fe-4S] cluster is required as a cofactor.

The catalysed reaction is (2E)-4-hydroxy-3-methylbut-2-enyl diphosphate + oxidized [flavodoxin] + H2O + 2 H(+) = 2-C-methyl-D-erythritol 2,4-cyclic diphosphate + reduced [flavodoxin]. Its pathway is isoprenoid biosynthesis; isopentenyl diphosphate biosynthesis via DXP pathway; isopentenyl diphosphate from 1-deoxy-D-xylulose 5-phosphate: step 5/6. Functionally, converts 2C-methyl-D-erythritol 2,4-cyclodiphosphate (ME-2,4cPP) into 1-hydroxy-2-methyl-2-(E)-butenyl 4-diphosphate. The polypeptide is 4-hydroxy-3-methylbut-2-en-1-yl diphosphate synthase (flavodoxin) (Vibrio cholerae serotype O1 (strain ATCC 39315 / El Tor Inaba N16961)).